The following is a 176-amino-acid chain: Small ribosomal subunit protein uS5 (176 aa).

In terms of domain architecture, S5 DRBM spans 11-74 (LSEVLVDVNR…QAAKKRMMKV (64 aa)).

This sequence belongs to the universal ribosomal protein uS5 family. Part of the 30S ribosomal subunit. Contacts proteins S4 and S8.

With S4 and S12 plays an important role in translational accuracy. In terms of biological role, located at the back of the 30S subunit body where it stabilizes the conformation of the head with respect to the body. The chain is Small ribosomal subunit protein uS5 from Rickettsia rickettsii (strain Iowa).